Reading from the N-terminus, the 300-residue chain is GTPase Era (300 aa).

The region spanning 6–173 (KSGFVAIVGR…MDVLVEQMPE (168 aa)) is the Era-type G domain. The tract at residues 14 to 21 (GRPNVGKS) is G1. Residue 14 to 21 (GRPNVGKS) participates in GTP binding. Residues 40-44 (QTTRN) are G2. The interval 61-64 (DTPG) is G3. GTP-binding positions include 61 to 65 (DTPGI) and 123 to 126 (NKID). Residues 123–126 (NKID) are G4. Positions 152-154 (ISA) are G5. Positions 204-281 (TRDEIPHSVA…YLELWVKVQK (78 aa)) constitute a KH type-2 domain.

This sequence belongs to the TRAFAC class TrmE-Era-EngA-EngB-Septin-like GTPase superfamily. Era GTPase family. As to quaternary structure, monomer.

It is found in the cytoplasm. It localises to the cell membrane. An essential GTPase that binds both GDP and GTP, with rapid nucleotide exchange. Plays a role in 16S rRNA processing and 30S ribosomal subunit biogenesis and possibly also in cell cycle regulation and energy metabolism. The polypeptide is GTPase Era (Enterococcus faecalis (strain ATCC 700802 / V583)).